The primary structure comprises 764 residues: Thyrotropin receptor (764 aa).

A signal peptide spans Met-1 to Gly-21. The Extracellular segment spans residues Lys-22–Gly-413. A disulfide bridge connects residues Cys-31 and Cys-41. N-linked (GlcNAc...) asparagine glycosylation is found at Asn-77 and Asn-99. 6 LRR repeats span residues Leu-125–Thr-150, Asp-151–Gly-174, Cys-176–Gly-199, Lys-201–Gly-223, Phe-225–His-248, and Lys-250–His-271. N-linked (GlcNAc...) asparagine glycosylation is found at Asn-177 and Asn-198. An N-linked (GlcNAc...) asparagine glycan is attached at Asn-302. A Sulfotyrosine modification is found at Tyr-385. Residues Tyr-414 to Thr-441 form a helical membrane-spanning segment. Over Ser-442 to Arg-450 the chain is Cytoplasmic. The chain crosses the membrane as a helical span at residues Phe-451 to Val-473. Over Asp-474 to Cys-494 the chain is Extracellular. Cys-494 and Cys-569 are oxidised to a cystine. Residues Asn-495 to Leu-517 traverse the membrane as a helical segment. Residues Glu-518–His-537 lie on the Cytoplasmic side of the membrane. A helical membrane pass occupies residues Ala-538–Ile-560. At Ser-561–Leu-580 the chain is on the extracellular side. The helical transmembrane segment at Ala-581 to Val-602 threads the bilayer. The Cytoplasmic segment spans residues Lys-603 to Arg-625. A helical membrane pass occupies residues Met-626–Met-649. Topologically, residues Asn-650–Lys-660 are extracellular. The chain crosses the membrane as a helical span at residues Ile-661–Thr-682. At Lys-683–Leu-764 the chain is on the cytoplasmic side. The short motif at Pro-762 to Leu-764 is the PDZ-binding element.

It belongs to the G-protein coupled receptor 1 family. FSH/LSH/TSH subfamily. Interacts with heterodimer GPHA2:GPHB5; this interaction stimulates cAMP production. Interacts (via the PDZ-binding motif) with SCRIB; regulates TSHR trafficking and function. Post-translationally, glycosylated. In terms of processing, sulfated. Sulfation on Tyr-385 plays a role in thyrotropin receptor binding and activation. As to expression, expressed in thyroide cells (at protein level).

It localises to the cell membrane. Its subcellular location is the basolateral cell membrane. Its function is as follows. Receptor for the thyroid-stimulating hormone (TSH) or thyrotropin. Also acts as a receptor for the heterodimeric glycoprotein hormone (GPHA2:GPHB5) or thyrostimulin. The activity of this receptor is mediated by G proteins which activate adenylate cyclase. Plays a central role in controlling thyroid cell metabolism. The protein is Thyrotropin receptor (TSHR) of Sus scrofa (Pig).